A 168-amino-acid chain; its full sequence is Small ribosomal subunit protein uS5 (168 aa).

In terms of domain architecture, S5 DRBM spans 11 to 74; the sequence is YSEKVVKIDR…ESAKKHLVKI (64 aa).

This sequence belongs to the universal ribosomal protein uS5 family. Part of the 30S ribosomal subunit. Contacts proteins S4 and S8.

Functionally, with S4 and S12 plays an important role in translational accuracy. In terms of biological role, located at the back of the 30S subunit body where it stabilizes the conformation of the head with respect to the body. In Leptospira interrogans serogroup Icterohaemorrhagiae serovar copenhageni (strain Fiocruz L1-130), this protein is Small ribosomal subunit protein uS5.